The chain runs to 94 residues: Large ribosomal subunit protein bL27 (94 aa).

The propeptide occupies 1-9; that stretch reads MLRLDLQFF.

The protein belongs to the bacterial ribosomal protein bL27 family. In terms of processing, the N-terminus is cleaved by ribosomal processing cysteine protease Prp.

The chain is Large ribosomal subunit protein bL27 from Bacillus pumilus (strain SAFR-032).